Reading from the N-terminus, the 208-residue chain is Uridine kinase (208 aa).

ATP is bound at residue 11 to 18 (GGTGSGKS).

This sequence belongs to the uridine kinase family.

The protein localises to the cytoplasm. The enzyme catalyses uridine + ATP = UMP + ADP + H(+). It catalyses the reaction cytidine + ATP = CMP + ADP + H(+). The protein operates within pyrimidine metabolism; CTP biosynthesis via salvage pathway; CTP from cytidine: step 1/3. Its pathway is pyrimidine metabolism; UMP biosynthesis via salvage pathway; UMP from uridine: step 1/1. This is Uridine kinase from Clostridium perfringens (strain SM101 / Type A).